A 300-amino-acid polypeptide reads, in one-letter code: UPF0761 membrane protein Patl_3954 (300 aa).

The next 6 membrane-spanning stretches (helical) occupy residues 46–66 (LLSL…FPAF), 103–123 (MGAI…SNID), 138–158 (IIFT…LIGL), 184–204 (MLKI…YMIV), 214–234 (ALVG…GFSF), and 248–268 (AMAV…VVLL).

It belongs to the UPF0761 family.

Its subcellular location is the cell inner membrane. This is UPF0761 membrane protein Patl_3954 from Pseudoalteromonas atlantica (strain T6c / ATCC BAA-1087).